The sequence spans 54 residues: Lectin alpha chain (54 aa).

The protein belongs to the leguminous lectin family. Tetramer of two alpha and two beta chains.

This chain is Lectin alpha chain, found in Lathyrus tingitanus (Tangier pea).